The primary structure comprises 1741 residues: S-layer protein (1741 aa).

Residues 894–904 (SFTSDSANGSG) are compositionally biased toward polar residues. Residues 894–913 (SFTSDSANGSGHSVEGGTGD) form a disordered region.

Glycosylated.

Its subcellular location is the secreted. The protein localises to the cell wall. It localises to the S-layer. Its function is as follows. S-layer protein. The S-layer is a paracrystalline mono-layered assembly of proteins which coats the surface of bacteria. Under laboratory conditions, has a supportive but not a critical role in the function of the cyanobacterium. Shows no apparent hemolytic activity against sheep erythrocytes, however, a slight hemolytic activity is detected during the conformational change caused by the rebinding of Ca(2+). This Synechocystis sp. (strain ATCC 27184 / PCC 6803 / Kazusa) protein is S-layer protein.